A 219-amino-acid chain; its full sequence is Probable GTP-binding protein EngB (219 aa).

The EngB-type G domain occupies 24–207; it reads VQPEIAFAGR…HELIESWLRP (184 aa). GTP is bound by residues 32–39, 59–63, 81–84, 148–151, and 186–188; these read GRSNAGKS, GRTQH, DLPG, TKCD, and FSA. Mg(2+)-binding residues include serine 39 and threonine 61.

Belongs to the TRAFAC class TrmE-Era-EngA-EngB-Septin-like GTPase superfamily. EngB GTPase family. It depends on Mg(2+) as a cofactor.

Necessary for normal cell division and for the maintenance of normal septation. This chain is Probable GTP-binding protein EngB, found in Burkholderia ambifaria (strain ATCC BAA-244 / DSM 16087 / CCUG 44356 / LMG 19182 / AMMD) (Burkholderia cepacia (strain AMMD)).